We begin with the raw amino-acid sequence, 666 residues long: Probable potassium transport system protein Kup (666 aa).

Helical transmembrane passes span 16-36 (GFII…LYTM), 58-78 (ISLI…LVAL), 99-119 (TPWL…DGAL), 141-161 (IFQN…LLFA), 167-187 (TGVI…FLGI), 221-241 (IFIL…YSDL), 253-273 (WPFV…WILA), 292-312 (FTMH…QALI), 343-363 (TYIP…VLLF), 373-393 (YGLA…FFLI), 402-422 (VLLM…ASAV), and 424-444 (FMHG…IMII).

The protein belongs to the HAK/KUP transporter (TC 2.A.72) family.

It localises to the cell membrane. The catalysed reaction is K(+)(in) + H(+)(in) = K(+)(out) + H(+)(out). In terms of biological role, transport of potassium into the cell. Likely operates as a K(+):H(+) symporter. This is Probable potassium transport system protein Kup from Streptococcus agalactiae serotype III (strain NEM316).